The chain runs to 232 residues: Large ribosomal subunit protein uL1 (232 aa).

Belongs to the universal ribosomal protein uL1 family. Part of the 50S ribosomal subunit.

Functionally, binds directly to 23S rRNA. The L1 stalk is quite mobile in the ribosome, and is involved in E site tRNA release. Its function is as follows. Protein L1 is also a translational repressor protein, it controls the translation of the L11 operon by binding to its mRNA. This is Large ribosomal subunit protein uL1 from Parabacteroides distasonis (strain ATCC 8503 / DSM 20701 / CIP 104284 / JCM 5825 / NCTC 11152).